We begin with the raw amino-acid sequence, 420 residues long: Gamma-glutamyl phosphate reductase (420 aa).

This sequence belongs to the gamma-glutamyl phosphate reductase family.

The protein localises to the cytoplasm. It carries out the reaction L-glutamate 5-semialdehyde + phosphate + NADP(+) = L-glutamyl 5-phosphate + NADPH + H(+). The protein operates within amino-acid biosynthesis; L-proline biosynthesis; L-glutamate 5-semialdehyde from L-glutamate: step 2/2. In terms of biological role, catalyzes the NADPH-dependent reduction of L-glutamate 5-phosphate into L-glutamate 5-semialdehyde and phosphate. The product spontaneously undergoes cyclization to form 1-pyrroline-5-carboxylate. This Cereibacter sphaeroides (strain ATCC 17023 / DSM 158 / JCM 6121 / CCUG 31486 / LMG 2827 / NBRC 12203 / NCIMB 8253 / ATH 2.4.1.) (Rhodobacter sphaeroides) protein is Gamma-glutamyl phosphate reductase.